The chain runs to 205 residues: SREBP regulating gene protein (205 aa).

Topologically, residues methionine 1–arginine 16 are cytoplasmic. Residues tryptophan 17 to phenylalanine 35 traverse the membrane as a helical segment. Residues lysine 36–valine 205 are Lumenal-facing. N-linked (GlcNAc...) asparagine glycosylation is present at asparagine 67.

The protein belongs to the SPRING family.

The protein localises to the golgi apparatus membrane. Functionally, positively regulates hepatic SREBP signaling pathway by modulating the proper localization of SCAP (SREBP cleavage-activating protein) to the endoplasmic reticulum, thereby controlling the level of functional SCAP. The polypeptide is SREBP regulating gene protein (Gallus gallus (Chicken)).